Reading from the N-terminus, the 363-residue chain is 2,5-diketocamphane 1,2-monooxygenase 1 (363 aa).

FMN contacts are provided by residues methionine 74 and 186–194; that span reads TGLTKNSSS.

Belongs to the bacterial luciferase oxidoreductase family. As to quaternary structure, homodimer. Likely forms a loose transient complex with a P.putida flavin reductase that provides the required FMNH(2) to the enzyme.

The catalysed reaction is (1R,4R)-bornane-2,5-dione + FMNH2 + O2 = (1R,4R)-5-oxo-1,2-campholide + FMN + H2O + H(+). It participates in terpene metabolism; (R)-camphor degradation. Involved in the degradation and assimilation of (+)-camphor, which allows P.putida strain NCIMB 10007 to grow on this enantiomer of camphor as the sole carbon source. Catalyzes the FMNH(2)-dependent lactonization of 2,5-diketocamphane via a Baeyer-Villiger oxidation to produce the unstable lactone 5-oxo-1,2-campholide with (R,R) configuration, that presumably undergoes spontaneous hydrolysis to form 2-oxo-Delta(3)-4,5,5-trimethylcyclopentenylacetate. Is also able to convert (+)-camphor and norcamphor to the corresponding lactone in vitro. Shows no conversion of (-)-camphor, (+)-fenchone, (-)-fenchone, and (+)-nopinone. Acts only on bicyclic ketones; is not active towards monocyclic ketones, aromatic ketones, the aliphatic 2-decanone, 1-indanone and progesterone. This is 2,5-diketocamphane 1,2-monooxygenase 1 from Pseudomonas putida (Arthrobacter siderocapsulatus).